A 117-amino-acid chain; its full sequence is Protein OPG035 (117 aa).

Belongs to the poxviridae OPG035 family.

Bcl-2-like protein which contributes to virulence by preventing host NF-kappa-B activation in response to pro-inflammatory stimuli such as TNF-alpha or IL1B. This Bos taurus (Bovine) protein is Protein OPG035 (OPG035).